An 843-amino-acid chain; its full sequence is Glycogen phosphorylase, brain form (843 aa).

The residue at position 2 (Ala-2) is an N-acetylalanine. Ser-15 carries the phosphoserine; by PHK; in form phosphorylase A modification. Positions 43, 197, and 310 each coordinate AMP. Phosphotyrosine is present on Tyr-197. Tyr-473 carries the post-translational modification Phosphotyrosine. Lys-569 contributes to the pyridoxal 5'-phosphate binding site. The interval 677-678 (TG) is pyridoxal 5'-phosphate. Position 681 is an N6-(pyridoxal phosphate)lysine (Lys-681).

It belongs to the glycogen phosphorylase family. Homodimer. Dimers associate into a tetramer to form the enzymatically active phosphorylase A. Pyridoxal 5'-phosphate is required as a cofactor. In terms of processing, phosphorylation of Ser-15 converts phosphorylase B (unphosphorylated) to phosphorylase A.

It catalyses the reaction [(1-&gt;4)-alpha-D-glucosyl](n) + phosphate = [(1-&gt;4)-alpha-D-glucosyl](n-1) + alpha-D-glucose 1-phosphate. Activity of phosphorylase is controlled both by allosteric means (through the non-covalent binding of metabolites) and by covalent modification. Thus AMP allosterically activates, whereas ATP, ADP, and glucose-6-phosphate allosterically inhibit, phosphorylase B. In terms of biological role, glycogen phosphorylase that regulates glycogen mobilization. Phosphorylase is an important allosteric enzyme in carbohydrate metabolism. Enzymes from different sources differ in their regulatory mechanisms and in their natural substrates. However, all known phosphorylases share catalytic and structural properties. This Ovis aries (Sheep) protein is Glycogen phosphorylase, brain form (PYGB).